The chain runs to 130 residues: Modulator protein MzrA (130 aa).

The Cytoplasmic portion of the chain corresponds to 1–15 (MIAAFIKRHAPQRRL). A helical membrane pass occupies residues 16–36 (SLWLALPVVALLALVMMPALF). Residues 37-130 (RHDSALQIRA…RISFKPQSIG (94 aa)) are Periplasmic-facing.

Belongs to the MzrA family. In terms of assembly, interacts with EnvZ.

It localises to the cell inner membrane. Modulates the activity of the EnvZ/OmpR two-component regulatory system, probably by directly modulating EnvZ enzymatic activity and increasing stability of phosphorylated OmpR. The sequence is that of Modulator protein MzrA from Erwinia tasmaniensis (strain DSM 17950 / CFBP 7177 / CIP 109463 / NCPPB 4357 / Et1/99).